The chain runs to 315 residues: NAD(P)H-dependent anabolic L-arginine dehydrogenase DauB (315 aa).

This sequence belongs to the ornithine cyclodeaminase/mu-crystallin family.

It catalyses the reaction L-arginine + NAD(+) + H2O = 5-guanidino-2-oxopentanoate + NH4(+) + NADH + H(+). It carries out the reaction L-arginine + NADP(+) + H2O = 5-guanidino-2-oxopentanoate + NH4(+) + NADPH + H(+). Functionally, involved in the anabolism of D-lysine and D-arginine. Under aerobic conditions, the arginine succinyltransferase (AST) and arginine transaminase (ATA) pathways are 2 major routes for L-arginine utilization as the sole source of carbon and nitrogen. The D-to-L racemization of arginine by DauA and DauB is necessary, before to be channeled into the AST and/or ATA pathways. DauB catalyzes the synthesis of L-arginine from 2-ketoarginine (2-KA) and ammonium. In Pseudomonas aeruginosa (strain ATCC 15692 / DSM 22644 / CIP 104116 / JCM 14847 / LMG 12228 / 1C / PRS 101 / PAO1), this protein is NAD(P)H-dependent anabolic L-arginine dehydrogenase DauB.